Here is a 257-residue protein sequence, read N- to C-terminus: Aspartate/glutamate leucyltransferase (257 aa).

This sequence belongs to the R-transferase family. Bpt subfamily.

It is found in the cytoplasm. It catalyses the reaction N-terminal L-glutamyl-[protein] + L-leucyl-tRNA(Leu) = N-terminal L-leucyl-L-glutamyl-[protein] + tRNA(Leu) + H(+). The catalysed reaction is N-terminal L-aspartyl-[protein] + L-leucyl-tRNA(Leu) = N-terminal L-leucyl-L-aspartyl-[protein] + tRNA(Leu) + H(+). Functionally, functions in the N-end rule pathway of protein degradation where it conjugates Leu from its aminoacyl-tRNA to the N-termini of proteins containing an N-terminal aspartate or glutamate. The sequence is that of Aspartate/glutamate leucyltransferase from Rhodopseudomonas palustris (strain HaA2).